The following is a 1007-amino-acid chain: Rho-type GTPase-activating protein 1 (1007 aa).

LIM zinc-binding domains are found at residues 13–66 (CVRC…CFDC) and 70–122 (CKNC…CLSC). 3 disordered regions span residues 203–293 (ITGY…KSPS), 401–478 (EKYS…STSL), and 505–600 (KETA…NDPS). Residues 212-221 (NSGSSKFGSN) are compositionally biased toward low complexity. Composition is skewed to polar residues over residues 250–261 (ANMSLNVATDPT) and 270–293 (HSRN…KSPS). T278 carries the phosphothreonine modification. At S291 the chain carries Phosphoserine. A compositionally biased stretch (basic residues) spans 411-421 (KGRKISRSLSR). Basic and acidic residues predominate over residues 454 to 466 (RSQDLMRDNDSHT). Polar residues-rich tracts occupy residues 467 to 478 (GLDTPNSNSTSL) and 529 to 579 (SPAT…LENS). At T532 the chain carries Phosphothreonine. Over residues 583-600 (EEQKETLYENSESRNDPS) the composition is skewed to basic and acidic residues. In terms of domain architecture, Rho-GAP spans 791–1006 (SSLVARCNYE…FIFGNYKDIL (216 aa)).

Functionally, GTPase-activating protein (GAP) for CDC42 and/or RHO1. Negative regulator of the pheromone-response pathway through the STE20 protein kinase; acts at a step between the G-protein and the MAP kinase module. Dominant suppressor of bud emergence defect caused by deletion of IPL2/BEM2. Involved in the control of polarized cell growth and proper bud site selection. The sequence is that of Rho-type GTPase-activating protein 1 (RGA1) from Saccharomyces cerevisiae (strain ATCC 204508 / S288c) (Baker's yeast).